Consider the following 213-residue polypeptide: Adenylate kinase (213 aa).

10–15 (GAGKGT) serves as a coordination point for ATP. Residues 30–59 (STGDMLRAAVAAGSEVGLRAKAAMESGSLV) form an NMP region. Residues Thr31, Arg36, 57–59 (SLV), 85–88 (GFPR), and Gln92 each bind AMP. Residues 126–163 (GRSSCEKCGEGYHDSFKPSAQPNVCDKCSGTLKRRADD) are LID. Arg127 serves as a coordination point for ATP. Zn(2+) contacts are provided by Cys130, Cys133, Cys150, and Cys153. AMP-binding residues include Arg160 and Arg171. Gln199 is a binding site for ATP.

Belongs to the adenylate kinase family. As to quaternary structure, monomer.

It localises to the cytoplasm. It catalyses the reaction AMP + ATP = 2 ADP. The protein operates within purine metabolism; AMP biosynthesis via salvage pathway; AMP from ADP: step 1/1. Its function is as follows. Catalyzes the reversible transfer of the terminal phosphate group between ATP and AMP. Plays an important role in cellular energy homeostasis and in adenine nucleotide metabolism. This is Adenylate kinase from Magnetococcus marinus (strain ATCC BAA-1437 / JCM 17883 / MC-1).